Here is an 881-residue protein sequence, read N- to C-terminus: Probable inorganic carbon transporter subunit DabA (881 aa).

Cys-399, Asp-401, His-585, and Cys-600 together coordinate Zn(2+).

This sequence belongs to the inorganic carbon transporter (TC 9.A.2) DabA family. In terms of assembly, forms a complex with DabB. Zn(2+) serves as cofactor.

Its subcellular location is the cell membrane. In terms of biological role, part of an energy-coupled inorganic carbon pump. The sequence is that of Probable inorganic carbon transporter subunit DabA from Geobacillus sp. (strain WCH70).